A 2175-amino-acid polypeptide reads, in one-letter code: MQPTLPQAAGTADMDLTAVQSINDWFFKKEQIYLLAQFWQQRATLAEKEVNTLKEQLSTGNPDSNLNSENSDTAAAAATAAAVAAVVAGATATNDIEDEQQQQLQQTASGGILESDSDKLLNSSIVAAAITLQQQNGSNLLANTNTPSPSPPLLSAEQQQQLQSSLQQSGGVGGACLNPKLFFNHAQQMMMMEAAAAAAAAALQQQQQQQSPLHSPANEVAIPTEQPAATVATGAAAAAAAAATPIATGNVKSGSTTSNANHTNSNNSHQDEEELDDEEEDEEEDEDEDDEEENASMQSNADDMELDAQQETRTEPSATTQQQHQQQDTEDLEENKDAGEASLNVSNNHNTTDSNNSCSRKNNNGGNESEQHVASSAEDDDCANNNTNTSNNNNTSNTATSNTNNNNNNNSSSGNSEKRKKKNNNNNNGQPAVLLAAKDKEIKALLDELQRLRAQEQTHLVQIQRLEEHLEVKRQHIIRLEARLDKQQINEALAEATALSAAASTNNNNNSQSSDNNKKLNTAAERPMDASSNADLPESTKAPVPAEDDEEDEDQAMLVDSEEAEDKPEDSHHDDDEDEDEDREAVNATTTDSNELKIKKEQHSPLDLNVLSPNSAIAAAAAAAAAAACANDPNKFQALLIERTKALAAEALKNGASDALSEDAHHQQQQHHQQQHQHQQQHHQQQHLHQQHHHHLQQQPNSGSNSNPASNDHHHGHHLHGHGLLHPSSAHHLHHQTTESNSNSSTPTAAGNNNGSNNSSSNTNANSTAQLAASLASTLNGTKSLMQEDSNGLAAVAMAAHAQHAAALGPGFLPGLPAFQFAAAQVAAGGDGRGHYRFADSELQLPPGASMAGRLGESLIPKGDPMEAKLQEMLRYNMDKYANQALDTLHISRRVRELLSVHNIGQRLFAKYILGLSQGTVSELLSKPKPWDKLTEKGRDSYRKMHAWACDDNAVMLLKSLIPKKDSGLPQYAGRGAGGAGGDDSMSEDRIAHILSEASSLMKQSSVAQHREQERRSHGGEDSHSNEDSKSPPQSCTSPFFKVENQLKQHQHLNPEQAAAQQREREREQREREQQQRLRHDDQDKMARLYQELIARTPRETAFPSFLFSPSLFGGAAGMPGAASNAFPAMADENMRHVFEREIAKLQQHQQQQQAAQAQAQFPNFSSLMALQQQVLNGAQDLSLAAAAAKDIKLNGQRSSLEHSAGSSSCSKDGERDDAYPSSLHGRKSEGGGTPAPPAPPSGPGTGAGAPPTAAPPTGGASSNSAAPSPLSNSILPPALSSQGEEFAATASPLQRMASITNSLITQPPVTPHHSTPQRPTKAVLPPITQQQFDMFNNLNTEDIVRRVKEALSQYSISQRLFGESVLGLSQGSVSDLLARPKPWHMLTQKGREPFIRMKMFLEDENAVHKLVASQYKIAPEKLMRTGSYSGSPQMPQGLASKMQAASLPMQKMMSELKLQEPAQAQHLMQQMQAAAMSAAMQQQQVAQAQQQAQQAQQAQQHLQQQAQQHLQQQQHLAQQQHPHQQHHQAAAAAAALHHQSMLLTSPGLPPQHAISLPPSAGGAQPGGPGGNQGSSNPSNSEKKPMLMPVHGTNAMRSLHQHMSPTVYEMAALTQDLDTHDITTKIKEALLANNIGQKIFGEAVLGLSQGSVSELLSKPKPWHMLSIKGREPFIRMQLWLSDANNVERLQLLKNERREASKRRRSTGPNQQDNSSDTSSNDTNDFYTSSPGPGSVGSGVGGAPPSKKQRVLFSEEQKEALRLAFALDPYPNVGTIEFLANELGLATRTITNWFHNHRMRLKQQVPHGPAGQDNPIPSRESTSATPFDPVQFRILLQQRLLELHKERMGMSGAPIPYPPYFAAAAILGRSLAGIPGAAAAAGAAAAAAAVGASGGDELQALNQAFKEQMSGLDLSMPTLKRERSDDYQDDLELEGGGHNLSDNESLEGQEPEDKTTDYEKVLHKSALAAAAAYMSNAVRSSRRKPAAPQWVNPAGAVTNPSAVVAAVAAAAAAAADNERIINGVCVMQASEYGRDDTDSNKPTDGGNDSDHEHAQLEIDQRFMEPEVHIKQEEDDDEEQSGSVNLDNEDNATSEQKLKVINEEKLRMVRVRRLSSTGGGSSEEMPAPLAPPPPPPAASSSIVSGESTTSSSSSSNTSSSTPAVTTAAATAAAGWNY.

Disordered regions lie at residues 139–170 (NLLA…QQSG) and 249–432 (GNVK…GQPA). Composition is skewed to low complexity over residues 153–169 (LLSA…LQQS) and 249–268 (GNVK…SNNS). Residues 265-343 (SNNSHQDEEE…ENKDAGEASL (79 aa)) adopt a coiled-coil conformation. The span at 271–294 (DEEELDDEEEDEEEDEDEDDEEEN) shows a compositional bias: acidic residues. Polar residues predominate over residues 309 to 320 (QQETRTEPSATT). Residues 344-359 (NVSNNHNTTDSNNSCS) show a composition bias toward low complexity. The span at 360–374 (RKNNNGGNESEQHVA) shows a compositional bias: polar residues. Low complexity predominate over residues 384–415 (NNNTNTSNNNNTSNTATSNTNNNNNNNSSSGN). Residues 433-499 (VLLAAKDKEI…NEALAEATAL (67 aa)) are a coiled coil. Residues 503–515 (ASTNNNNNSQSSD) are compositionally biased toward low complexity. Disordered stretches follow at residues 503 to 600 (ASTN…KIKK) and 656 to 765 (ASDA…NTNA). Positions 546 to 568 (AEDDEEDEDQAMLVDSEEAEDKP) are enriched in acidic residues. Basic residues predominate over residues 673–696 (QQQHQHQQQHHQQQHLHQQHHHHL). Positions 697–710 (QQQPNSGSNSNPAS) are enriched in low complexity. A compositionally biased stretch (basic residues) spans 714-735 (HHGHHLHGHGLLHPSSAHHLHH). Over residues 738-765 (TESNSNSSTPTAAGNNNGSNNSSSNTNA) the composition is skewed to low complexity. The CUT 1 DNA-binding region spans 877 to 964 (NMDKYANQAL…VMLLKSLIPK (88 aa)). Disordered stretches follow at residues 1001–1083 (LMKQ…HDDQ) and 1197–1289 (QRSS…EFAA). 2 stretches are compositionally biased toward basic and acidic residues: residues 1009-1030 (QHRE…EDSK) and 1062-1083 (QRER…HDDQ). Residues 1056–1161 (EQAAAQQRER…QQQAAQAQAQ (106 aa)) are a coiled coil. The span at 1249 to 1282 (GAPPTAAPPTGGASSNSAAPSPLSNSILPPALSS) shows a compositional bias: low complexity. The CUT 2 DNA-binding region spans 1330-1417 (QQQFDMFNNL…VHKLVASQYK (88 aa)). Residues 1463–1522 (AQAQHLMQQMQAAAMSAAMQQQQVAQAQQQAQQAQQAQQHLQQQAQQHLQQQQHLAQQQH) are a coiled coil. Residues 1507-1540 (AQQHLQQQQHLAQQQHPHQQHHQAAAAAAALHHQ) show a composition bias toward low complexity. 6 disordered regions span residues 1507 to 1588 (AQQH…PMLM), 1695 to 1747 (ERRE…PSKK), 1803 to 1826 (QVPH…ATPF), 1922 to 1955 (RSDD…DKTT), 2069 to 2097 (KQEE…QKLK), and 2113 to 2175 (SSTG…GWNY). The span at 1564 to 1573 (AQPGGPGGNQ) shows a compositional bias: gly residues. The CUT 3 DNA-binding region spans 1608–1695 (YEMAALTQDL…VERLQLLKNE (88 aa)). Residues 1709–1732 (NQQDNSSDTSSNDTNDFYTSSPGP) are compositionally biased toward low complexity. The segment at residues 1745–1804 (SKKQRVLFSEEQKEALRLAFALDPYPNVGTIEFLANELGLATRTITNWFHNHRMRLKQQV) is a DNA-binding region (homeobox). Phosphoserine is present on residues Ser-1940 and Ser-1944. The span at 2126–2135 (PLAPPPPPPA) shows a compositional bias: pro residues. A compositionally biased stretch (low complexity) spans 2136–2175 (ASSSIVSGESTTSSSSSSNTSSSTPAVTTAAATAAAGWNY).

The protein belongs to the CUT homeobox family. In terms of tissue distribution, detected in many cells in the central nervous system, all external sensory organs, some peripheral neurons, and in the non-neural cells of the spiracles and the Malpighian tubules.

It localises to the nucleus. Regulator of cell fate decisions in multiple lineages. Specifically, functions as a determination factor that specifies sensory organ identity in precursor cells. Probably also involved in cell type specification of Malpighian tubules. In absence of cut gene external sensory organs are transformed into chordotonal organs. In Drosophila melanogaster (Fruit fly), this protein is Homeobox protein cut (ct).